We begin with the raw amino-acid sequence, 137 residues long: Fluoride-specific ion channel FluC 2 (137 aa).

Helical transmembrane passes span 3–23 (MGGS…SVLG), 44–64 (WGTM…GALA), 76–96 (PWLF…SFSL), and 111–131 (LGNV…GFLL). Residues Gly86 and Thr89 each coordinate Na(+).

It belongs to the fluoride channel Fluc/FEX (TC 1.A.43) family.

The protein localises to the cell inner membrane. The enzyme catalyses fluoride(in) = fluoride(out). Na(+) is not transported, but it plays an essential structural role and its presence is essential for fluoride channel function. Its function is as follows. Fluoride-specific ion channel. Important for reducing fluoride concentration in the cell, thus reducing its toxicity. The chain is Fluoride-specific ion channel FluC 2 from Bradyrhizobium diazoefficiens (strain JCM 10833 / BCRC 13528 / IAM 13628 / NBRC 14792 / USDA 110).